Here is a 487-residue protein sequence, read N- to C-terminus: Cytochrome P450 2C4 (487 aa).

Cys432 serves as a coordination point for heme.

This sequence belongs to the cytochrome P450 family. It depends on heme as a cofactor.

It is found in the endoplasmic reticulum membrane. It localises to the microsome membrane. The enzyme catalyses an organic molecule + reduced [NADPH--hemoprotein reductase] + O2 = an alcohol + oxidized [NADPH--hemoprotein reductase] + H2O + H(+). Functionally, cytochromes P450 are a group of heme-thiolate monooxygenases. In liver microsomes, this enzyme is involved in an NADPH-dependent electron transport pathway. It oxidizes a variety of structurally unrelated compounds, including steroids, fatty acids, and xenobiotics. The protein is Cytochrome P450 2C4 (CYP2C4) of Oryctolagus cuniculus (Rabbit).